We begin with the raw amino-acid sequence, 669 residues long: MTGLFQLVSSYSPSGDQPAAVQKLVTNFHAGIAKQVLLGVTGSGKTYTIANVVEQIQKPTLVMAPNKTLAAQLYGEFKAFFPHNAVEYFVSYYDYYQPEAYVPASDTFIEKDSSINEYIEQMRLAATKALLSRSDVLVVATVSAIYGLGAPEDYLSLRLILSLGEHIEQRQLIRHLTELQYTRNELDLVRGSFRVRGEVVDVFPAESEMEALRIELFDGEIESLSLFDPLTGQTVRKLQRFSVYPKTHYATTRERTLSAVDTIKDELKEYLELLYGRNKLVEAQRLAQRTQFDLEMMAEVGYCNGIENYSRHLTGKAPGEPPPTLFDYLPPDALLVIDESHVTIPQIGAMFKGDRSRKETLVEFGFRLPSALDNRPLRFEEWEVRSPRSIYVSATPGSYEFRESAGEVIELLVRPTGLIDPEIEIRPVATQVDDLISQINACIKLGDRVLVTTLTKRMAENLTEYLSEQGIRIRYLHSEIDTVERVEIIRDLRLGKFDVLVGINLLREGLDMPEVSLVAILDADKEGFLRSTSSLIQTIGRAARSVRGRAILYADKVTRSMRAAIDETERRRQKQKEYNAENGIVPKSVVRPISDILEGARDGVEVKSKGKGRRVDEVPADYGALNQAEIAAQMKMLEQQMYQHARDLEFEDAARIRDQIQRLREAGLG.

Residues 26–183 enclose the Helicase ATP-binding domain; the sequence is TNFHAGIAKQ…RHLTELQYTR (158 aa). 39 to 46 provides a ligand contact to ATP; sequence GVTGSGKT. Residues 92–115 carry the Beta-hairpin motif; that stretch reads YYDYYQPEAYVPASDTFIEKDSSI. The region spanning 431–597 is the Helicase C-terminal domain; that stretch reads QVDDLISQIN…SVVRPISDIL (167 aa). The region spanning 631–666 is the UVR domain; sequence AAQMKMLEQQMYQHARDLEFEDAARIRDQIQRLREA.

It belongs to the UvrB family. Forms a heterotetramer with UvrA during the search for lesions. Interacts with UvrC in an incision complex.

The protein resides in the cytoplasm. In terms of biological role, the UvrABC repair system catalyzes the recognition and processing of DNA lesions. A damage recognition complex composed of 2 UvrA and 2 UvrB subunits scans DNA for abnormalities. Upon binding of the UvrA(2)B(2) complex to a putative damaged site, the DNA wraps around one UvrB monomer. DNA wrap is dependent on ATP binding by UvrB and probably causes local melting of the DNA helix, facilitating insertion of UvrB beta-hairpin between the DNA strands. Then UvrB probes one DNA strand for the presence of a lesion. If a lesion is found the UvrA subunits dissociate and the UvrB-DNA preincision complex is formed. This complex is subsequently bound by UvrC and the second UvrB is released. If no lesion is found, the DNA wraps around the other UvrB subunit that will check the other stand for damage. The polypeptide is UvrABC system protein B (Xylella fastidiosa (strain M12)).